The following is a 259-amino-acid chain: L-arginine-binding protein (259 aa).

An N-terminal signal peptide occupies residues 1-21 (MKKLALLGALALSVLSLPTFA).

It belongs to the bacterial solute-binding protein 3 family.

The protein resides in the periplasm. Functionally, binds L-arginine with high affinity. Shows no measurable affinity for L-ornithine. The polypeptide is L-arginine-binding protein (Pseudomonas aeruginosa (strain ATCC 15692 / DSM 22644 / CIP 104116 / JCM 14847 / LMG 12228 / 1C / PRS 101 / PAO1)).